A 347-amino-acid polypeptide reads, in one-letter code: Intracellular hyaluronan-binding protein 4 (347 aa).

Disordered regions lie at residues 39 to 221 and 298 to 347; these read GTEK…PSET and FGSL…PALA. 4 stretches are compositionally biased toward basic and acidic residues: residues 61–71, 83–107, 116–125, and 146–174; these read VKKESQRDRKT, PGHE…DAEK, RPVDVLDRPA, and DGFD…EKRS. The span at 199–213 shows a compositional bias: acidic residues; that stretch reads EVTENEETQEAVETD. Over residues 307–319 the composition is skewed to gly residues; it reads GGRGGRGGRGRGG. Acidic residues predominate over residues 338 to 347; that stretch reads DDPEDFPALA.

It belongs to the SERBP1-HABP4 family. As to quaternary structure, associates with ribosomes; promoting ribosome stabilization. Interacts with eef2/eEF2; promoting ribosome stabilization.

The protein localises to the nucleus. It is found in the cytoplasm. Its subcellular location is the stress granule. It localises to the nucleolus. The protein resides in the nucleus speckle. The protein localises to the cajal body. Functionally, ribosome-binding protein that promotes ribosome hibernation, a process during which ribosomes are stabilized in an inactive state and preserved from proteasomal degradation. Acts via its association with eef2/eEF2 factor at the A-site of the ribosome, promoting ribosome stabilization in an inactive state compatible with storage. Plays a key role in ribosome hibernation in the mature egg by promoting ribosome stabilization. Ribosomes, which are produced in large quantities during oogenesis, are stored and translationally repressed in the egg and early embryo. In Danio rerio (Zebrafish), this protein is Intracellular hyaluronan-binding protein 4.